A 236-amino-acid polypeptide reads, in one-letter code: Uridylate kinase (236 aa).

10-11 (GS) provides a ligand contact to ATP. Residue Gly-44 participates in UMP binding. 2 residues coordinate ATP: Gly-45 and Arg-49. Residues Asp-66 and 114 to 120 (ITPGQTT) contribute to the UMP site. The ATP site is built by Thr-140, Tyr-146, and Asp-149.

This sequence belongs to the UMP kinase family. In terms of assembly, homohexamer.

It localises to the cytoplasm. It catalyses the reaction UMP + ATP = UDP + ADP. Its pathway is pyrimidine metabolism; CTP biosynthesis via de novo pathway; UDP from UMP (UMPK route): step 1/1. Inhibited by UTP. Functionally, catalyzes the reversible phosphorylation of UMP to UDP. In Methanospirillum hungatei JF-1 (strain ATCC 27890 / DSM 864 / NBRC 100397 / JF-1), this protein is Uridylate kinase.